The chain runs to 143 residues: Putative complexin-1 (143 aa).

The segment at 15–71 (NEVTGGLGLKDDGGEKTETGEDPEVVAARLEQEERRKEKHRKMEQEREKMRQGIRDK) is disordered. 2 stretches are compositionally biased toward basic and acidic residues: residues 23 to 33 (LKDDGGEKTET) and 44 to 71 (LEQEERRKEKHRKMEQEREKMRQGIRDK). Residues 40-71 (VAARLEQEERRKEKHRKMEQEREKMRQGIRDK) are a coiled coil.

It belongs to the complexin/synaphin family.

The protein localises to the cytoplasm. It localises to the cytosol. Positively regulates a late step in synaptic vesicle exocytosis. In Caenorhabditis briggsae, this protein is Putative complexin-1 (cpx-1).